Reading from the N-terminus, the 158-residue chain is pH 6 antigen (158 aa).

The signal sequence occupies residues 1–26 (MKMKCFAKNALAVTTLMIAACGMANA).

Forms a homomer composed of subunits assembled in a large structure.

Its subcellular location is the fimbrium. Fibrillar structure, part of fimbriae, necessary for full virulence. The chain is pH 6 antigen (psaA) from Yersinia pestis.